Consider the following 430-residue polypeptide: Asparagine--tRNA ligase (430 aa).

The protein belongs to the class-II aminoacyl-tRNA synthetase family. Homodimer.

Its subcellular location is the cytoplasm. The enzyme catalyses tRNA(Asn) + L-asparagine + ATP = L-asparaginyl-tRNA(Asn) + AMP + diphosphate + H(+). This Geobacillus thermodenitrificans (strain NG80-2) protein is Asparagine--tRNA ligase.